A 325-amino-acid chain; its full sequence is Beta-ketoacyl-[acyl-carrier-protein] synthase III (325 aa).

Active-site residues include Cys-119 and His-252. Residues 253–257 form an ACP-binding region; that stretch reads QANIR. Asn-282 is an active-site residue.

This sequence belongs to the thiolase-like superfamily. FabH family. Homodimer.

It localises to the cytoplasm. The catalysed reaction is malonyl-[ACP] + acetyl-CoA + H(+) = 3-oxobutanoyl-[ACP] + CO2 + CoA. It participates in lipid metabolism; fatty acid biosynthesis. Its function is as follows. Catalyzes the condensation reaction of fatty acid synthesis by the addition to an acyl acceptor of two carbons from malonyl-ACP. Catalyzes the first condensation reaction which initiates fatty acid synthesis and may therefore play a role in governing the total rate of fatty acid production. Possesses both acetoacetyl-ACP synthase and acetyl transacylase activities. Its substrate specificity determines the biosynthesis of branched-chain and/or straight-chain of fatty acids. In Verminephrobacter eiseniae (strain EF01-2), this protein is Beta-ketoacyl-[acyl-carrier-protein] synthase III.